The sequence spans 61 residues: MAKKSQIAKNKRPAKFSTQAYTRCERCGRPHSVYQKFHLCRICLRELAHKGQIPGMKKASW.

Zn(2+) contacts are provided by C24, C27, C40, and C43.

Belongs to the universal ribosomal protein uS14 family. Zinc-binding uS14 subfamily. In terms of assembly, part of the 30S ribosomal subunit. Contacts proteins S3 and S10. Zn(2+) serves as cofactor.

In terms of biological role, binds 16S rRNA, required for the assembly of 30S particles and may also be responsible for determining the conformation of the 16S rRNA at the A site. The protein is Small ribosomal subunit protein uS14B of Levilactobacillus brevis (strain ATCC 367 / BCRC 12310 / CIP 105137 / JCM 1170 / LMG 11437 / NCIMB 947 / NCTC 947) (Lactobacillus brevis).